Reading from the N-terminus, the 116-residue chain is Vitelline membrane protein Vm32E (116 aa).

An N-terminal signal peptide occupies residues 1 to 17 (MKIVAFTLVAFVALAGA). The VM domain maps to 36–73 (GYPAPPCPTNYLFSCQPNLAPAPCAQEAPAYGSAGAYT).

The protein belongs to the vitelline membrane family.

Its subcellular location is the secreted. Major early eggshell protein. In Drosophila santomea (Fruit fly), this protein is Vitelline membrane protein Vm32E.